Reading from the N-terminus, the 236-residue chain is Lipoprotein signal peptidase (236 aa).

Transmembrane regions (helical) follow at residues 8-28 (FYGIALLAVVIDQVLKLWVYF), 44-64 (WFKLFYTLNPGMAFGIQFGFT), 68-88 (VLLTIIRIIATSMIIKYIWNL), and 98-118 (LLWGWSLILGGAAGNGIDSIF). Catalysis depends on residues aspartate 141 and aspartate 174. A helical membrane pass occupies residues 166 to 186 (CLPVFNLADVAILAGVALIVL).

Belongs to the peptidase A8 family.

It is found in the cell inner membrane. It carries out the reaction Release of signal peptides from bacterial membrane prolipoproteins. Hydrolyzes -Xaa-Yaa-Zaa-|-(S,diacylglyceryl)Cys-, in which Xaa is hydrophobic (preferably Leu), and Yaa (Ala or Ser) and Zaa (Gly or Ala) have small, neutral side chains.. It functions in the pathway protein modification; lipoprotein biosynthesis (signal peptide cleavage). Functionally, this protein specifically catalyzes the removal of signal peptides from prolipoproteins. The sequence is that of Lipoprotein signal peptidase from Amoebophilus asiaticus (strain 5a2).